Here is a 130-residue protein sequence, read N- to C-terminus: MAENQYYGTGRRKSSAARVFLKPGSGKIVINQRSLEVYFGRETARMVVNQPLELVDMVTKFDMYITVKGGGISGQAGAIRHGITRALMEYDESLRGELRKAGFVTRDAREVERKKVGLRKARRRPQFSKR.

This sequence belongs to the universal ribosomal protein uS9 family.

The chain is Small ribosomal subunit protein uS9 from Yersinia enterocolitica serotype O:8 / biotype 1B (strain NCTC 13174 / 8081).